The sequence spans 364 residues: Long-wave-sensitive opsin 1 (364 aa).

Residues 1-52 are Extracellular-facing; sequence MAHTWGPQRLAGGQPQANFEESTQGSIFTYTNSNSTRDPFEGPNYHIAPRWV. Ser22 carries O-linked (GlcNAc) serine glycosylation. N-linked (GlcNAc...) asparagine glycosylation occurs at Asn34. The chain crosses the membrane as a helical span at residues 53–77; it reads YHLTSAWMVFVVIASVFTNGLVLAA. At 78 to 89 the chain is on the cytoplasmic side; that stretch reads TMRFKKLRHPLN. The chain crosses the membrane as a helical span at residues 90-115; that stretch reads WILVNLAIADLAETIIASTISVVNQM. The Extracellular segment spans residues 116–129; that stretch reads YGYFVLGHPLCVVE. Cys126 and Cys203 are oxidised to a cystine. Residues 130-149 form a helical membrane-spanning segment; sequence GYTVSLCGITGLWSLAIISW. At 150–168 the chain is on the cytoplasmic side; sequence ERWMVVCKPFGNVRFDAKL. The helical transmembrane segment at 169-192 threads the bilayer; the sequence is ATAGIAFSWIWAAVWTAPPIFGWS. Residues 193–218 lie on the Extracellular side of the membrane; sequence RYWPHGLKTSCGPDVFSGSSYPGVQS. Residues 219–246 form a helical membrane-spanning segment; that stretch reads YMIVLMITCCFIPLSVIILCYLQVWLAI. Residues 247–268 are Cytoplasmic-facing; it reads RAVAKQQKESESTQKAEKEVTR. A helical membrane pass occupies residues 269–292; sequence MVMVMIFAYCLCWGPYTFFACFAA. The Extracellular portion of the chain corresponds to 293–300; the sequence is AHPGYAFH. A helical transmembrane segment spans residues 301–325; sequence PLVAALPAYFAKSATIYNPIIYVFM. Lys312 is subject to N6-(retinylidene)lysine. Topologically, residues 326–364 are cytoplasmic; sequence NRQFRNCILQLFGKKVDDSSELSSVSKTEASSVSSVSPA.

Belongs to the G-protein coupled receptor 1 family. Opsin subfamily. Phosphorylated on some or all of the serine and threonine residues present in the C-terminal region. The three color pigments are found in the cone photoreceptor cells.

The protein resides in the membrane. Its function is as follows. Visual pigments are the light-absorbing molecules that mediate vision. They consist of an apoprotein, opsin, covalently linked to cis-retinal. This chain is Long-wave-sensitive opsin 1 (OPN1LW), found in Capra hircus (Goat).